The chain runs to 89 residues: Small ribosomal subunit protein uS17 (89 aa).

Belongs to the universal ribosomal protein uS17 family. In terms of assembly, part of the 30S ribosomal subunit.

One of the primary rRNA binding proteins, it binds specifically to the 5'-end of 16S ribosomal RNA. The sequence is that of Small ribosomal subunit protein uS17 from Chlorobium chlorochromatii (strain CaD3).